A 321-amino-acid chain; its full sequence is Aspartate carbamoyltransferase catalytic subunit (321 aa).

2 residues coordinate carbamoyl phosphate: Arg57 and Thr58. Lys85 serves as a coordination point for L-aspartate. Residues Arg107, His142, and Gln145 each contribute to the carbamoyl phosphate site. L-aspartate contacts are provided by Arg175 and Arg229. Residues Gly270 and Pro271 each coordinate carbamoyl phosphate.

It belongs to the aspartate/ornithine carbamoyltransferase superfamily. ATCase family. As to quaternary structure, heterododecamer (2C3:3R2) of six catalytic PyrB chains organized as two trimers (C3), and six regulatory PyrI chains organized as three dimers (R2).

It catalyses the reaction carbamoyl phosphate + L-aspartate = N-carbamoyl-L-aspartate + phosphate + H(+). It participates in pyrimidine metabolism; UMP biosynthesis via de novo pathway; (S)-dihydroorotate from bicarbonate: step 2/3. Catalyzes the condensation of carbamoyl phosphate and aspartate to form carbamoyl aspartate and inorganic phosphate, the committed step in the de novo pyrimidine nucleotide biosynthesis pathway. The polypeptide is Aspartate carbamoyltransferase catalytic subunit (Mycobacterium leprae (strain TN)).